The following is a 177-amino-acid chain: 3-hydroxydecanoyl-[acyl-carrier-protein] dehydratase (177 aa).

Residue His-76 is part of the active site.

It belongs to the thioester dehydratase family. FabA subfamily. Homodimer.

The protein resides in the cytoplasm. The enzyme catalyses a (3R)-hydroxyacyl-[ACP] = a (2E)-enoyl-[ACP] + H2O. The catalysed reaction is (3R)-hydroxydecanoyl-[ACP] = (2E)-decenoyl-[ACP] + H2O. It carries out the reaction (2E)-decenoyl-[ACP] = (3Z)-decenoyl-[ACP]. It functions in the pathway lipid metabolism; fatty acid biosynthesis. Its function is as follows. Necessary for the introduction of cis unsaturation into fatty acids. Catalyzes the dehydration of (3R)-3-hydroxydecanoyl-ACP to E-(2)-decenoyl-ACP and then its isomerization to Z-(3)-decenoyl-ACP. Can catalyze the dehydratase reaction for beta-hydroxyacyl-ACPs with saturated chain lengths up to 16:0, being most active on intermediate chain length. This chain is 3-hydroxydecanoyl-[acyl-carrier-protein] dehydratase, found in Mannheimia succiniciproducens (strain KCTC 0769BP / MBEL55E).